Consider the following 550-residue polypeptide: Chaperonin GroEL (550 aa).

ATP-binding positions include 30 to 33 (TLGP), Lys51, 87 to 91 (DGTTT), Gly415, 479 to 481 (NAA), and Asp495.

It belongs to the chaperonin (HSP60) family. In terms of assembly, forms a cylinder of 14 subunits composed of two heptameric rings stacked back-to-back. Interacts with the co-chaperonin GroES.

The protein resides in the cytoplasm. The enzyme catalyses ATP + H2O + a folded polypeptide = ADP + phosphate + an unfolded polypeptide.. Together with its co-chaperonin GroES, plays an essential role in assisting protein folding. The GroEL-GroES system forms a nano-cage that allows encapsulation of the non-native substrate proteins and provides a physical environment optimized to promote and accelerate protein folding. This chain is Chaperonin GroEL, found in Aromatoleum aromaticum (strain DSM 19018 / LMG 30748 / EbN1) (Azoarcus sp. (strain EbN1)).